Here is a 281-residue protein sequence, read N- to C-terminus: DegV domain-containing protein CPE2509 (281 aa).

Residues 4–279 enclose the DegV domain; it reads IAIITDSSCD…PGMVGVSIQK (276 aa). Residues threonine 60 and serine 93 each coordinate hexadecanoate.

Functionally, may bind long-chain fatty acids, such as palmitate, and may play a role in lipid transport or fatty acid metabolism. The polypeptide is DegV domain-containing protein CPE2509 (Clostridium perfringens (strain 13 / Type A)).